We begin with the raw amino-acid sequence, 141 residues long: Large-conductance mechanosensitive channel (141 aa).

The next 2 helical transmembrane spans lie at 21-41 (VGVI…GDLI) and 85-105 (GSFL…FMMV).

This sequence belongs to the MscL family. Homopentamer.

It is found in the cell inner membrane. Channel that opens in response to stretch forces in the membrane lipid bilayer. May participate in the regulation of osmotic pressure changes within the cell. In Dechloromonas aromatica (strain RCB), this protein is Large-conductance mechanosensitive channel.